Here is a 143-residue protein sequence, read N- to C-terminus: MERISALGLDVGKKRIGVAGCDGTGLIATGLTTIERQSFPQDVQQLEALVKEREVQLLVIGLPYSMDGTIGFQAKKVQKFAKRLSTALELPIEYIDERLTSVEAETHLKSQKKYSRYNKGLVDRLAATIILQQWLDQRRASLI.

The protein belongs to the YqgF nuclease family.

It localises to the cytoplasm. Its function is as follows. Could be a nuclease involved in processing of the 5'-end of pre-16S rRNA. This Crocosphaera subtropica (strain ATCC 51142 / BH68) (Cyanothece sp. (strain ATCC 51142)) protein is Putative pre-16S rRNA nuclease.